A 410-amino-acid chain; its full sequence is LL-diaminopimelate aminotransferase (410 aa).

Positions 15 and 42 each coordinate substrate. Pyridoxal 5'-phosphate is bound by residues tyrosine 72, 108–109, tyrosine 132, asparagine 187, tyrosine 218, and 246–248; these read AK and SFS. 3 residues coordinate substrate: lysine 109, tyrosine 132, and asparagine 187. An N6-(pyridoxal phosphate)lysine modification is found at lysine 249. Residues arginine 257 and asparagine 292 each contribute to the pyridoxal 5'-phosphate site. Residues asparagine 292 and arginine 388 each coordinate substrate.

Belongs to the class-I pyridoxal-phosphate-dependent aminotransferase family. LL-diaminopimelate aminotransferase subfamily. In terms of assembly, homodimer. Pyridoxal 5'-phosphate is required as a cofactor.

It carries out the reaction (2S,6S)-2,6-diaminopimelate + 2-oxoglutarate = (S)-2,3,4,5-tetrahydrodipicolinate + L-glutamate + H2O + H(+). Its pathway is amino-acid biosynthesis; L-lysine biosynthesis via DAP pathway; LL-2,6-diaminopimelate from (S)-tetrahydrodipicolinate (aminotransferase route): step 1/1. Functionally, involved in the synthesis of meso-diaminopimelate (m-DAP or DL-DAP), required for both lysine and peptidoglycan biosynthesis. Catalyzes the direct conversion of tetrahydrodipicolinate to LL-diaminopimelate. The chain is LL-diaminopimelate aminotransferase from Picosynechococcus sp. (strain ATCC 27264 / PCC 7002 / PR-6) (Agmenellum quadruplicatum).